The following is a 342-amino-acid chain: Peroxisomal membrane protein import receptor PEX19 (342 aa).

Positions 1–18 (MNENEYDNFDDLDDLLDE) are enriched in acidic residues. Disordered regions lie at residues 1-68 (MNEN…DPEL) and 119-141 (CSSL…GFKN). The span at 41–54 (SENKEKNAESKDSD) shows a compositional bias: basic and acidic residues. Serine 62 bears the Phosphoserine mark. Position 304 is a phosphoserine (serine 304). A disordered region spans residues 321–342 (IDGNDPNLGNLDKELTDGCKQQ). Residues 331 to 342 (LDKELTDGCKQQ) are compositionally biased toward basic and acidic residues. The residue at position 339 (cysteine 339) is a Cysteine methyl ester. Cysteine 339 carries the S-farnesyl cysteine lipid modification. A propeptide spans 340–342 (KQQ) (removed in mature form).

Belongs to the peroxin-19 family. Interacts (farnesylated) with PEX3; farnesylation is required for this interaction. Interacts with PEX2, PEX5, PEX10, PEX11, PEX12, PEX13, PEX14, PEX17, PEX22, PEX25, PEX30 and PEX32; the interaction requires well-defined PEX19-binding sites within the peroxisomal membrane protein targeting signal (mPTS) of the PMPs and is independent on the presence of PEX3. Interacts with VPS1.

It is found in the cytoplasm. The protein resides in the peroxisome membrane. The protein localises to the endoplasmic reticulum membrane. Functionally, required for proper post-translational import and stabilization of peroxisomal membrane proteins (PMPs). Acts as a cytosolic import receptor for PMPs and delivers them to the docking factor PEX3 at the peroxisomal membrane for subsequent insertion into the membrane. Acts as a chaperone in stabilizing or maintaining PMPs in the lipid bilayer. Directs PEX17, a peripheral component of the peroxisomal matrix protein translocation machinery, to peroxisomes. Stabilizes VPS1, a protein required for peroxisomal fission, at the peroxisomal membrane. Also acts in conjunction with PEX3 in the formation of peroxisomes from preperoxisomal compartments at the endoplasmic reticulum during de novo peroxisome synthesis, probably via the import of additional PMPs. The sequence is that of Peroxisomal membrane protein import receptor PEX19 (PEX19) from Saccharomyces cerevisiae (strain ATCC 204508 / S288c) (Baker's yeast).